The following is a 211-amino-acid chain: Thiamine-phosphate synthase (211 aa).

4-amino-2-methyl-5-(diphosphooxymethyl)pyrimidine contacts are provided by residues 37 to 41 (QLRIK) and Asn69. Positions 70 and 89 each coordinate Mg(2+). Ser108 serves as a coordination point for 4-amino-2-methyl-5-(diphosphooxymethyl)pyrimidine. Residue 134 to 136 (TQT) participates in 2-[(2R,5Z)-2-carboxy-4-methylthiazol-5(2H)-ylidene]ethyl phosphate binding. Lys137 contacts 4-amino-2-methyl-5-(diphosphooxymethyl)pyrimidine. Residues Gly166 and 186–187 (VS) each bind 2-[(2R,5Z)-2-carboxy-4-methylthiazol-5(2H)-ylidene]ethyl phosphate.

The protein belongs to the thiamine-phosphate synthase family. Mg(2+) serves as cofactor.

It carries out the reaction 2-[(2R,5Z)-2-carboxy-4-methylthiazol-5(2H)-ylidene]ethyl phosphate + 4-amino-2-methyl-5-(diphosphooxymethyl)pyrimidine + 2 H(+) = thiamine phosphate + CO2 + diphosphate. The catalysed reaction is 2-(2-carboxy-4-methylthiazol-5-yl)ethyl phosphate + 4-amino-2-methyl-5-(diphosphooxymethyl)pyrimidine + 2 H(+) = thiamine phosphate + CO2 + diphosphate. It catalyses the reaction 4-methyl-5-(2-phosphooxyethyl)-thiazole + 4-amino-2-methyl-5-(diphosphooxymethyl)pyrimidine + H(+) = thiamine phosphate + diphosphate. Its pathway is cofactor biosynthesis; thiamine diphosphate biosynthesis; thiamine phosphate from 4-amino-2-methyl-5-diphosphomethylpyrimidine and 4-methyl-5-(2-phosphoethyl)-thiazole: step 1/1. Functionally, condenses 4-methyl-5-(beta-hydroxyethyl)thiazole monophosphate (THZ-P) and 2-methyl-4-amino-5-hydroxymethyl pyrimidine pyrophosphate (HMP-PP) to form thiamine monophosphate (TMP). The sequence is that of Thiamine-phosphate synthase from Escherichia coli O139:H28 (strain E24377A / ETEC).